The chain runs to 182 residues: FMN reductase (NADH) RutF (182 aa).

It belongs to the non-flavoprotein flavin reductase family. RutF subfamily.

The enzyme catalyses FMNH2 + NAD(+) = FMN + NADH + 2 H(+). Functionally, catalyzes the reduction of FMN to FMNH2 which is used to reduce pyrimidine by RutA via the Rut pathway. In Yersinia enterocolitica serotype O:8 / biotype 1B (strain NCTC 13174 / 8081), this protein is FMN reductase (NADH) RutF.